Consider the following 268-residue polypeptide: Interleukin-1 beta (268 aa).

A propeptide spanning residues M1–D115 is cleaved from the precursor.

This sequence belongs to the IL-1 family. As to quaternary structure, monomer. In its precursor form, weakly interacts with full-length MEFV; the mature cytokine does not interact at all. Interacts with integrins ITGAV:ITGBV and ITGA5:ITGB1; integrin-binding is required for IL1B signaling. Interacts with cargo receptor TMED10; the interaction is direct and is required for the secretion of IL1B mature form. Interacts with HSP90AB1; the interaction facilitates cargo translocation into the ERGIC. Interacts with HSP90B1; the interaction facilitates cargo translocation into the ERGIC.

It is found in the cytoplasm. Its subcellular location is the cytosol. The protein resides in the secreted. It localises to the lysosome. The protein localises to the extracellular exosome. Its function is as follows. Potent pro-inflammatory cytokine. Initially discovered as the major endogenous pyrogen, induces prostaglandin synthesis, neutrophil influx and activation, T-cell activation and cytokine production, B-cell activation and antibody production, and fibroblast proliferation and collagen production. Promotes Th17 differentiation of T-cells. Synergizes with IL12/interleukin-12 to induce IFNG synthesis from T-helper 1 (Th1) cells. Plays a role in angiogenesis by inducing VEGF production synergistically with TNF and IL6. Involved in transduction of inflammation downstream of pyroptosis: its mature form is specifically released in the extracellular milieu by passing through the gasdermin-D (GSDMD) pore. The polypeptide is Interleukin-1 beta (IL1B) (Equus caballus (Horse)).